Consider the following 271-residue polypeptide: Murein DD-endopeptidase MepH (271 aa).

The first 27 residues, methionine 1–alanine 27, serve as a signal peptide directing secretion. The tract at residues alanine 27–alanine 102 is disordered. Residues lysine 55–alanine 64 are compositionally biased toward basic residues. The span at serine 65–lysine 86 shows a compositional bias: low complexity. One can recognise a NlpC/P60 domain in the interval glutamine 138–methionine 265. Cysteine 169 serves as the catalytic Nucleophile. Histidine 224 (proton acceptor) is an active-site residue. The active site involves glutamine 236.

Belongs to the peptidase C40 family.

The protein operates within cell wall biogenesis; cell wall polysaccharide biosynthesis. Its function is as follows. A murein DD-endopeptidase with specificity for D-Ala-meso-diaminopimelic acid (mDAP) cross-links. Its role is probably to cleave D-Ala-mDAP cross-links to allow insertion of new glycans and thus cell wall expansion. Functionally redundant with MepM and MepH. Partially suppresses an mepS disruption mutant. This chain is Murein DD-endopeptidase MepH (mepH), found in Escherichia coli (strain K12).